A 446-amino-acid chain; its full sequence is tRNA modification GTPase MnmE (446 aa).

(6S)-5-formyl-5,6,7,8-tetrahydrofolate is bound by residues arginine 21, glutamate 77, and lysine 116. A TrmE-type G domain is found at 212 to 370 (GFRIALIGAP…LRAALASHVA (159 aa)). Asparagine 222 contacts K(+). GTP is bound by residues 222-227 (NAGKST), 241-247 (TDVAGTT), and 266-269 (DTAG). A Mg(2+)-binding site is contributed by serine 226. K(+)-binding residues include threonine 241, valine 243, and threonine 246. Residue threonine 247 participates in Mg(2+) binding. Position 446 (lysine 446) interacts with (6S)-5-formyl-5,6,7,8-tetrahydrofolate.

It belongs to the TRAFAC class TrmE-Era-EngA-EngB-Septin-like GTPase superfamily. TrmE GTPase family. As to quaternary structure, homodimer. Heterotetramer of two MnmE and two MnmG subunits. The cofactor is K(+).

The protein resides in the cytoplasm. Its function is as follows. Exhibits a very high intrinsic GTPase hydrolysis rate. Involved in the addition of a carboxymethylaminomethyl (cmnm) group at the wobble position (U34) of certain tRNAs, forming tRNA-cmnm(5)s(2)U34. The polypeptide is tRNA modification GTPase MnmE (Caulobacter vibrioides (strain ATCC 19089 / CIP 103742 / CB 15) (Caulobacter crescentus)).